A 602-amino-acid polypeptide reads, in one-letter code: Aspartate--tRNA(Asp/Asn) ligase (602 aa).

Glutamate 176 contacts L-aspartate. The segment at 200 to 203 is aspartate; the sequence is QQFK. Residues arginine 222 and histidine 452 each contribute to the L-aspartate site. 222–224 contacts ATP; sequence RDE. Glutamate 490 contributes to the ATP binding site. Arginine 497 contacts L-aspartate. 542 to 545 provides a ligand contact to ATP; sequence GIDR.

The protein belongs to the class-II aminoacyl-tRNA synthetase family. Type 1 subfamily. Homodimer.

Its subcellular location is the cytoplasm. It catalyses the reaction tRNA(Asx) + L-aspartate + ATP = L-aspartyl-tRNA(Asx) + AMP + diphosphate. Functionally, aspartyl-tRNA synthetase with relaxed tRNA specificity since it is able to aspartylate not only its cognate tRNA(Asp) but also tRNA(Asn). Reaction proceeds in two steps: L-aspartate is first activated by ATP to form Asp-AMP and then transferred to the acceptor end of tRNA(Asp/Asn). This Rickettsia africae (strain ESF-5) protein is Aspartate--tRNA(Asp/Asn) ligase.